A 249-amino-acid polypeptide reads, in one-letter code: Small ribosomal subunit protein uS3 (249 aa).

The KH type-2 domain maps to 39-109 (IRTYVLARLK…EVKIDVVEVV (71 aa)). Basic and acidic residues predominate over residues 226–239 (KERRNDAGARNRDS). The tract at residues 226 to 249 (KERRNDAGARNRDSRTKRRHRTKR) is disordered. A compositionally biased stretch (basic residues) spans 240 to 249 (RTKRRHRTKR).

The protein belongs to the universal ribosomal protein uS3 family. In terms of assembly, part of the 30S ribosomal subunit. Forms a tight complex with proteins S10 and S14.

Its function is as follows. Binds the lower part of the 30S subunit head. Binds mRNA in the 70S ribosome, positioning it for translation. This is Small ribosomal subunit protein uS3 from Pelodictyon phaeoclathratiforme (strain DSM 5477 / BU-1).